We begin with the raw amino-acid sequence, 79 residues long: Sec-independent protein translocase protein TatA (79 aa).

Residues 1 to 21 form a helical membrane-spanning segment; it reads MGGFTSIWHWVIVLLVIVLLF. The disordered stretch occupies residues 48-79; the sequence is EEEAKNEPKTLDAQATQTKAHESSEIKSKQES. Over residues 66 to 79 the composition is skewed to basic and acidic residues; that stretch reads KAHESSEIKSKQES.

The protein belongs to the TatA/E family. The Tat system comprises two distinct complexes: a TatABC complex, containing multiple copies of TatA, TatB and TatC subunits, and a separate TatA complex, containing only TatA subunits. Substrates initially bind to the TatABC complex, which probably triggers association of the separate TatA complex to form the active translocon.

It is found in the cell inner membrane. Its function is as follows. Part of the twin-arginine translocation (Tat) system that transports large folded proteins containing a characteristic twin-arginine motif in their signal peptide across membranes. TatA could form the protein-conducting channel of the Tat system. The polypeptide is Sec-independent protein translocase protein TatA (Helicobacter pylori (strain P12)).